A 311-amino-acid chain; its full sequence is Aurora kinase (311 aa).

Positions 20-300 (FEIGRFLGRG…IEDILRHPFL (281 aa)) constitute a Protein kinase domain. Lysine 49 is a binding site for ATP. Catalysis depends on aspartate 143, which acts as the Proton acceptor. The interval 189 to 216 (DFGWSVHHPTHGGRRRTQCGTLDYLPPE) is activation loop. Residue threonine 205 is modified to Phosphothreonine; by autocatalysis. Positions 280–299 (MLIRSPEARISIEDILRHPF) match the Destruction (D)-box motif.

This sequence belongs to the protein kinase superfamily. Ser/Thr protein kinase family. Aurora subfamily. In terms of assembly, interacts with EB1 (via C-terminal residues 101-238). Phosphorylated in mitosis and cytokinesis. Activated by autophosphorylation at Thr-205.

The protein resides in the nucleus. The protein localises to the cytoplasm. It localises to the cytoskeleton. Its subcellular location is the microtubule organizing center. It is found in the centrosome. The protein resides in the spindle. The protein localises to the spindle pole. It localises to the nucleus membrane. It catalyses the reaction L-seryl-[protein] + ATP = O-phospho-L-seryl-[protein] + ADP + H(+). The enzyme catalyses L-threonyl-[protein] + ATP = O-phospho-L-threonyl-[protein] + ADP + H(+). With respect to regulation, activated by cell-cycle phase specific phosphorylation. Inhibited by ATP-competitive inhibitors N-[4-[[6-Methoxy-7-[3-(4-morpholinyl)propoxy]-4-quinazolinyl]amino]phenyl]benzamide (ZM447439) and cyclopropanecarboxylic acid-(3-(4-(3-trifluoromethylphenylamino)-pyrimidin-2-ylamino)-phenyl)-amide (CFPPA). Inhibition leads to reduced growth, increased cytokinesis, microtubular defects, and increased ploidy of the cells. Its function is as follows. Involved in regulation of the cell cycle. Required for mitotic cell division and cytokinesis. Based on its localization to centrosomes and spindle microtubules, as well as to various cytoskeletal components such as the median body, parental attachment disk, and anterior and posterior-lateral paraflagellar dense rods, may coordinate reorganization and segregation of tubulin-containing structures during mitosis and cytokinesis. May regulate microtubule disassembly by phosphorylating cytoskeletal proteins leading to their destabilization. Phosphorylates EB1 at 'Ser-148' in vitro. Phosphorylates histone H3 in vitro. The polypeptide is Aurora kinase (Giardia intestinalis (strain ATCC 50803 / WB clone C6) (Giardia lamblia)).